The sequence spans 451 residues: Tubulin alpha chain (451 aa).

Position 11 (Gln11) interacts with GTP. Residue Lys40 is modified to N6-acetyllysine. GTP is bound by residues Glu71, Gly144, Thr145, Thr179, Asn206, and Asn228. Glu71 contributes to the Mg(2+) binding site. Glu254 is an active-site residue.

It belongs to the tubulin family. As to quaternary structure, dimer of alpha and beta chains. A typical microtubule is a hollow water-filled tube with an outer diameter of 25 nm and an inner diameter of 15 nM. Alpha-beta heterodimers associate head-to-tail to form protofilaments running lengthwise along the microtubule wall with the beta-tubulin subunit facing the microtubule plus end conferring a structural polarity. Microtubules usually have 13 protofilaments but different protofilament numbers can be found in some organisms and specialized cells. Mg(2+) is required as a cofactor. Post-translationally, undergoes a tyrosination/detyrosination cycle, the cyclic removal and re-addition of a C-terminal tyrosine residue by the enzymes tubulin tyrosine carboxypeptidase (TTCP) and tubulin tyrosine ligase (TTL), respectively. Acetylation of alpha chains at Lys-40 stabilizes microtubules and affects affinity and processivity of microtubule motors. This modification has a role in multiple cellular functions, ranging from cell motility, cell cycle progression or cell differentiation to intracellular trafficking and signaling.

It is found in the cytoplasm. It localises to the cytoskeleton. The enzyme catalyses GTP + H2O = GDP + phosphate + H(+). Its function is as follows. Tubulin is the major constituent of microtubules, a cylinder consisting of laterally associated linear protofilaments composed of alpha- and beta-tubulin heterodimers. Microtubules grow by the addition of GTP-tubulin dimers to the microtubule end, where a stabilizing cap forms. Below the cap, tubulin dimers are in GDP-bound state, owing to GTPase activity of alpha-tubulin. The chain is Tubulin alpha chain (TUBA) from Chlorella vulgaris (Green alga).